Reading from the N-terminus, the 152-residue chain is Aspartate carbamoyltransferase regulatory chain (152 aa).

Zn(2+) contacts are provided by Cys-109, Cys-114, Cys-138, and Cys-141.

This sequence belongs to the PyrI family. In terms of assembly, contains catalytic and regulatory chains. Requires Zn(2+) as cofactor.

Its function is as follows. Involved in allosteric regulation of aspartate carbamoyltransferase. The protein is Aspartate carbamoyltransferase regulatory chain of Thermoplasma volcanium (strain ATCC 51530 / DSM 4299 / JCM 9571 / NBRC 15438 / GSS1).